The following is a 271-amino-acid chain: N-acetyltransferase ECO1 (271 aa).

Residues 1–38 (MKTYRAKRKYLSESEDDVFSSSPTQSPETSPLQPPNES) form a disordered region. The span at 20-31 (SSSPTQSPETSP) shows a compositional bias: low complexity. The CCHH-type zinc-finger motif lies at 80 to 104 (TTCKTCGMTYQVAYGPDISAHKSFH).

The protein belongs to the acetyltransferase family. ECO subfamily.

Its subcellular location is the nucleus. Functionally, probable acetyltransferase required for the establishment of sister chromatid cohesion and couple the processes of cohesion and DNA replication to ensure that only sister chromatids become paired together. In contrast to the structural cohesins, the deposition and establishment factors are required only during S phase. Acts by acetylating the cohesin complex component SMC3. The protein is N-acetyltransferase ECO1 (ECO1) of Yarrowia lipolytica (strain CLIB 122 / E 150) (Yeast).